The sequence spans 367 residues: 3-dehydroquinate synthase (367 aa).

Residues 69 to 74 (DGESHK), 103 to 107 (GVIGD), 127 to 128 (TT), Lys-140, Lys-149, and 167 to 170 (TLAT) contribute to the NAD(+) site. Positions 182, 245, and 262 each coordinate Zn(2+).

It belongs to the sugar phosphate cyclases superfamily. Dehydroquinate synthase family. The cofactor is Co(2+). It depends on Zn(2+) as a cofactor. NAD(+) is required as a cofactor.

It is found in the cytoplasm. The catalysed reaction is 7-phospho-2-dehydro-3-deoxy-D-arabino-heptonate = 3-dehydroquinate + phosphate. It functions in the pathway metabolic intermediate biosynthesis; chorismate biosynthesis; chorismate from D-erythrose 4-phosphate and phosphoenolpyruvate: step 2/7. Functionally, catalyzes the conversion of 3-deoxy-D-arabino-heptulosonate 7-phosphate (DAHP) to dehydroquinate (DHQ). In Stutzerimonas stutzeri (strain A1501) (Pseudomonas stutzeri), this protein is 3-dehydroquinate synthase.